We begin with the raw amino-acid sequence, 943 residues long: Centromere protein C (943 aa).

Residue Lys45 forms a Glycyl lysine isopeptide (Lys-Gly) (interchain with G-Cter in SUMO2) linkage. The segment at 70-91 (CIQSPSKECQKSHPKSVPVSSK) is disordered. Residues Ser73 and Ser96 each carry the phosphoserine modification. Lys119 participates in a covalent cross-link: Glycyl lysine isopeptide (Lys-Gly) (interchain with G-Cter in SUMO2). Thr130 bears the Phosphothreonine mark. Residue Lys134 forms a Glycyl lysine isopeptide (Lys-Gly) (interchain with G-Cter in SUMO2) linkage. Ser146 carries the post-translational modification Phosphoserine. A Glycyl lysine isopeptide (Lys-Gly) (interchain with G-Cter in SUMO2) cross-link involves residue Lys180. At Thr183 the chain carries Phosphothreonine. Ser189 carries the post-translational modification Phosphoserine. Glycyl lysine isopeptide (Lys-Gly) (interchain with G-Cter in SUMO2) cross-links involve residues Lys212 and Lys217. A compositionally biased stretch (basic and acidic residues) spans 224 to 239 (VSDEEDKTSEGQERKP). Residues 224–250 (VSDEEDKTSEGQERKPSGSSQNRIRDS) are disordered. Phosphoserine is present on Ser225. Glycyl lysine isopeptide (Lys-Gly) (interchain with G-Cter in SUMO2) cross-links involve residues Lys238 and Lys260. The short motif at 259–273 (KKSFSTLFLETVKRK) is the Nuclear localization signal element. Ser261 is subject to Phosphoserine. Glycyl lysine isopeptide (Lys-Gly) (interchain with G-Cter in SUMO2) cross-links involve residues Lys271, Lys273, and Lys297. Ser316, Ser333, Ser376, and Ser397 each carry phosphoserine. The interval 358–377 (LANDKHSHKPHPVETSQPSD) is disordered. The segment at 403–513 (YSKNAEKPSR…SKNKLVPEEV (111 aa)) is disordered. Basic residues predominate over residues 412–426 (RSKRTIKQKQRRKFM). 2 stretches are compositionally biased toward basic and acidic residues: residues 438–463 (QSKD…RNME) and 488–510 (TRKD…KLVP). The residue at position 439 (Ser439) is a Phosphoserine. Lys440 is covalently cross-linked (Glycyl lysine isopeptide (Lys-Gly) (interchain with G-Cter in SUMO2)). Residues 484 to 499 (KKSSTRKDKEESKKKR) carry the Nuclear localization signal motif. At Ser528 the chain carries Phosphoserine. Lys534 is covalently cross-linked (Glycyl lysine isopeptide (Lys-Gly) (interchain with G-Cter in SUMO2)). Disordered regions lie at residues 537–587 (ESPV…ATKG) and 632–717 (DCSR…KQSK). Ser538 is subject to Phosphoserine. The Nuclear localization signal motif lies at 558–574 (RKSTKKTNQSSKNIRKK). Residues 570–583 (NIRKKTIPLKRQKT) show a composition bias toward basic residues. The span at 633 to 672 (CSRSTRSSKNEDNIMTAQNVPLKPQTSGYTCNIPTESNLD) shows a compositional bias: polar residues. Lys677 participates in a covalent cross-link: Glycyl lysine isopeptide (Lys-Gly) (interchain with G-Cter in SUMO2). 3 positions are modified to phosphoserine: Ser684, Ser709, and Ser710. The segment covering 706–715 (VHGSSDDSKQ) has biased composition (basic and acidic residues). A Glycyl lysine isopeptide (Lys-Gly) (interchain with G-Cter in SUMO2) cross-link involves residue Lys727. A Phosphothreonine modification is found at Thr734. An MIF2 homology domain II region spans residues 737-759 (VRRTKRTRLKPLEYWRGERIDYQ). Ser763 and Ser773 each carry phosphoserine. A Nuclear localization signal motif is present at residues 780 to 798 (KRKAKENIGKVNKKSNKKR). Lys807 is covalently cross-linked (Glycyl lysine isopeptide (Lys-Gly) (interchain with G-Cter in SUMO2)). Residues 890–943 (LVFYVNFGDLLCTLHETPYILSTGDSFYVPSGNYYNIKNLRNEESVLLFTQIKR) form an MIF2 homology domain III region.

The protein belongs to the CENP-C/MIF2 family. As to quaternary structure, oligomer. Component of the CENPA-NAC complex, at least composed of CENPA, CENPC, CENPH, CENPM, CENPN, CENPT and CENPU. The CENPA-NAC complex interacts with the CENPA-CAD complex, composed of CENPI, CENPK, CENPL, CENPO, CENPP, CENPQ, CENPR and CENPS. Binds to DAXX. Interacts with DNMT3B. Interacts directly with CENPA. Identified in a centromere complex containing histones H2A, H2B and H4, and at least CENPA, CENPB, CENPC, CENPT, CENPN, HJURP, SUPT16H, SSRP1 and RSF1. Interacts with MEIKIN.

It is found in the nucleus. The protein resides in the chromosome. Its subcellular location is the centromere. The protein localises to the kinetochore. Functionally, component of the CENPA-NAC (nucleosome-associated) complex, a complex that plays a central role in assembly of kinetochore proteins, mitotic progression and chromosome segregation. The CENPA-NAC complex recruits the CENPA-CAD (nucleosome distal) complex and may be involved in incorporation of newly synthesized CENPA into centromeres. CENPC recruits DNA methylation and DNMT3B to both centromeric and pericentromeric satellite repeats and regulates the histone code in these regions. This is Centromere protein C (CENPC) from Homo sapiens (Human).